The chain runs to 371 residues: Alanine racemase (371 aa).

The active-site Proton acceptor; specific for D-alanine is Lys40. Lys40 is subject to N6-(pyridoxal phosphate)lysine. Residue Arg136 coordinates substrate. The active-site Proton acceptor; specific for L-alanine is Tyr263. Met310 is a binding site for substrate.

Belongs to the alanine racemase family. It depends on pyridoxal 5'-phosphate as a cofactor.

The enzyme catalyses L-alanine = D-alanine. The protein operates within amino-acid biosynthesis; D-alanine biosynthesis; D-alanine from L-alanine: step 1/1. Functionally, catalyzes the interconversion of L-alanine and D-alanine. May also act on other amino acids. This Streptococcus mutans serotype c (strain ATCC 700610 / UA159) protein is Alanine racemase (alr).